The chain runs to 1185 residues: Ovostatin homolog 1 (1185 aa).

A signal peptide spans 1–21 (MHVHVCVCLCVCIYTSSCVCA). Residues N80, N155, N347, N452, and N725 are each glycosylated (N-linked (GlcNAc...) asparagine).

The protein belongs to the protease inhibitor I39 (alpha-2-macroglobulin) family. As to quaternary structure, homotetramer.

It is found in the secreted. In terms of biological role, is able to inhibit all four classes of proteinases by a unique 'trapping' mechanism. This chain is Ovostatin homolog 1 (OVOS1), found in Homo sapiens (Human).